We begin with the raw amino-acid sequence, 605 residues long: UPF0313 protein GSU2873 (605 aa).

Residues 291–561 (AYEQIRASVT…LQKALLLWHL (271 aa)) enclose the Radical SAM core domain. Residues C305, C309, and C312 each contribute to the [4Fe-4S] cluster site. Residues 586–605 (GGAAGGGGGRSGSGFRPGRT) are disordered. Residues 587–597 (GAAGGGGGRSG) show a composition bias toward gly residues.

The protein belongs to the UPF0313 family. [4Fe-4S] cluster serves as cofactor.

This Geobacter sulfurreducens (strain ATCC 51573 / DSM 12127 / PCA) protein is UPF0313 protein GSU2873.